Here is a 121-residue protein sequence, read N- to C-terminus: Large ribosomal subunit protein uL14c (121 aa).

Belongs to the universal ribosomal protein uL14 family. As to quaternary structure, part of the 50S ribosomal subunit.

The protein localises to the plastid. Its subcellular location is the chloroplast. In terms of biological role, binds to 23S rRNA. This chain is Large ribosomal subunit protein uL14c, found in Phaeodactylum tricornutum (strain CCAP 1055/1).